The chain runs to 546 residues: Probable E3 ubiquitin-protein ligase NGR_a03640 (546 aa).

The segment at 1–70 is disordered; the sequence is MNVQRPGLAV…RPWEGRPQEA (70 aa). Residues 1–248 are interaction with target proteins; that stretch reads MNVQRPGLAV…YAGPQIFLPM (248 aa). Residues 22–48 are compositionally biased toward low complexity; it reads SEPGSPAAAARWVEASTEAEASAASSS. Over residues 58–67 the composition is skewed to basic and acidic residues; it reads AEERPWEGRP. LRR repeat units lie at residues 104-125, 126-144, 145-166, 167-186, and 187-208; these read GLRR…LPGT, LLEL…DLPA, GLQR…LPAA, LEWL…MIPP, and ELIW…LLTQ. The linker stretch occupies residues 249–256; sequence GPVELARR. An NEL domain is found at 257–546; that stretch reads PLHEVVADWL…KVLRGRGLEL (290 aa). The tract at residues 257–546 is E3 ubiquitin-protein ligase catalytic domain; sequence PLHEVVADWL…KVLRGRGLEL (290 aa). Cys-338 (glycyl thioester intermediate) is an active-site residue.

This sequence belongs to the LRR-containing bacterial E3 ligase family. Ubiquitinated in the presence of host E1 ubiquitin-activating enzyme, E2 ubiquitin-conjugating enzyme and ubiquitin.

Its subcellular location is the secreted. It localises to the host cytoplasm. Functionally, effector proteins function to alter host cell physiology and promote bacterial survival in host tissues. This protein is an E3 ubiquitin ligase that interferes with host's ubiquitination pathway. The sequence is that of Probable E3 ubiquitin-protein ligase NGR_a03640 from Sinorhizobium fredii (strain NBRC 101917 / NGR234).